A 141-amino-acid chain; its full sequence is Small ribosomal subunit protein uS12 (141 aa).

Positions 1–11 (MPTISQLVTTS) are enriched in polar residues. The segment at 1–22 (MPTISQLVTTSRQDKNYKSKSP) is disordered. Asp-102 carries the 3-methylthioaspartic acid modification.

This sequence belongs to the universal ribosomal protein uS12 family. As to quaternary structure, part of the 30S ribosomal subunit. Contacts proteins S8 and S17. May interact with IF1 in the 30S initiation complex.

In terms of biological role, with S4 and S5 plays an important role in translational accuracy. Its function is as follows. Interacts with and stabilizes bases of the 16S rRNA that are involved in tRNA selection in the A site and with the mRNA backbone. Located at the interface of the 30S and 50S subunits, it traverses the body of the 30S subunit contacting proteins on the other side and probably holding the rRNA structure together. The combined cluster of proteins S8, S12 and S17 appears to hold together the shoulder and platform of the 30S subunit. This is Small ribosomal subunit protein uS12 from Acholeplasma laidlawii (strain PG-8A).